The sequence spans 376 residues: Erythronate-4-phosphate dehydrogenase (376 aa).

Residues S45 and T67 each contribute to the substrate site. D147 provides a ligand contact to NAD(+). Residue R209 is part of the active site. D233 is a binding site for NAD(+). Residue E238 is part of the active site. The active-site Proton donor is H255. NAD(+) is bound at residue G258. Y259 is a substrate binding site.

This sequence belongs to the D-isomer specific 2-hydroxyacid dehydrogenase family. PdxB subfamily. As to quaternary structure, homodimer.

It localises to the cytoplasm. The catalysed reaction is 4-phospho-D-erythronate + NAD(+) = (R)-3-hydroxy-2-oxo-4-phosphooxybutanoate + NADH + H(+). It participates in cofactor biosynthesis; pyridoxine 5'-phosphate biosynthesis; pyridoxine 5'-phosphate from D-erythrose 4-phosphate: step 2/5. In terms of biological role, catalyzes the oxidation of erythronate-4-phosphate to 3-hydroxy-2-oxo-4-phosphonooxybutanoate. The polypeptide is Erythronate-4-phosphate dehydrogenase (Shewanella baltica (strain OS155 / ATCC BAA-1091)).